We begin with the raw amino-acid sequence, 243 residues long: MPERRGIVLVNAVSEKDLGEDKRKREKEKECEKLRKLLVEGLEGFVIDEKVLQAMLRVPRHRFVPEYEQRAAYVDMPLEIGHGQTISAPHMVAMMCEILELAEGHKVLEIGAGSGYNAAVMSELVGKTGHIYTVERVEPLANFAKKNLKEAGYKNVTVLLENGSMGYPGYAPYDRIAVTCAAPNIPETLLEQLKPGGIMVIPVGSYSQELIRVKKDSTGKIYRKKKGDVIFVPMIGKHGFRRI.

Ser-87 is an active-site residue.

This sequence belongs to the methyltransferase superfamily. L-isoaspartyl/D-aspartyl protein methyltransferase family.

Its subcellular location is the cytoplasm. It carries out the reaction [protein]-L-isoaspartate + S-adenosyl-L-methionine = [protein]-L-isoaspartate alpha-methyl ester + S-adenosyl-L-homocysteine. Its function is as follows. Catalyzes the methyl esterification of L-isoaspartyl residues in peptides and proteins that result from spontaneous decomposition of normal L-aspartyl and L-asparaginyl residues. It plays a role in the repair and/or degradation of damaged proteins. The chain is Protein-L-isoaspartate O-methyltransferase from Methanosarcina mazei (strain ATCC BAA-159 / DSM 3647 / Goe1 / Go1 / JCM 11833 / OCM 88) (Methanosarcina frisia).